The chain runs to 188 residues: Elongation factor P-like protein (188 aa).

This sequence belongs to the elongation factor P family.

This Xylella fastidiosa (strain M23) protein is Elongation factor P-like protein.